The chain runs to 432 residues: Phosphomethylpyrimidine synthase (432 aa).

Substrate-binding positions include Asn-66, Met-95, Tyr-124, His-163, 185 to 187, 226 to 229, and Glu-265; these read SRG and DGLR. His-269 lines the Zn(2+) pocket. Tyr-292 contributes to the substrate binding site. His-333 contacts Zn(2+). [4Fe-4S] cluster is bound by residues Cys-409, Cys-412, and Cys-416.

It belongs to the ThiC family. [4Fe-4S] cluster is required as a cofactor.

The catalysed reaction is 5-amino-1-(5-phospho-beta-D-ribosyl)imidazole + S-adenosyl-L-methionine = 4-amino-2-methyl-5-(phosphooxymethyl)pyrimidine + CO + 5'-deoxyadenosine + formate + L-methionine + 3 H(+). It participates in cofactor biosynthesis; thiamine diphosphate biosynthesis. Catalyzes the synthesis of the hydroxymethylpyrimidine phosphate (HMP-P) moiety of thiamine from aminoimidazole ribotide (AIR) in a radical S-adenosyl-L-methionine (SAM)-dependent reaction. This chain is Phosphomethylpyrimidine synthase, found in Thermoanaerobacter sp. (strain X514).